The primary structure comprises 304 residues: Putative ankyrin repeat protein R598 (304 aa).

7 ANK repeats span residues 7 to 36 (NIVTDIKNAICKDDLDSFIILMENNPSINL), 77 to 107 (YISTVLREEVIKNCSVKILKYLFDMGLPVDF), 122 to 151 (GSNHYIKENPGQDTLSLLRLLIEYGVDVNA), 152 to 181 (HNYLPLYSAVSSKNFDKVKLLVENGANVLR), 183 to 209 (ANGNENSFYFKIDSIKYLLDNGVEIDM), 210 to 239 (NLSRALFLSIKDNSIECIQFYLELGADINK), and 265 to 293 (FDFTSLNKLAGNNNERIIDVLINEANVDI).

The sequence is that of Putative ankyrin repeat protein R598 from Acanthamoeba polyphaga (Amoeba).